The primary structure comprises 390 residues: Altered inheritance of mitochondria protein 6 (390 aa).

Positions 1–26 are cleaved as a signal peptide; sequence MLGLKGCLTILIGYVIAVCALFSSRG.

The protein belongs to the AIM6 family.

The chain is Altered inheritance of mitochondria protein 6 (AIM6) from Saccharomyces cerevisiae (strain YJM789) (Baker's yeast).